Here is a 217-residue protein sequence, read N- to C-terminus: Probable transaldolase (217 aa).

Catalysis depends on Lys-84, which acts as the Schiff-base intermediate with substrate.

The protein belongs to the transaldolase family. Type 3B subfamily.

It is found in the cytoplasm. The enzyme catalyses D-sedoheptulose 7-phosphate + D-glyceraldehyde 3-phosphate = D-erythrose 4-phosphate + beta-D-fructose 6-phosphate. Its pathway is carbohydrate degradation; pentose phosphate pathway; D-glyceraldehyde 3-phosphate and beta-D-fructose 6-phosphate from D-ribose 5-phosphate and D-xylulose 5-phosphate (non-oxidative stage): step 2/3. Its function is as follows. Transaldolase is important for the balance of metabolites in the pentose-phosphate pathway. The polypeptide is Probable transaldolase (Roseiflexus castenholzii (strain DSM 13941 / HLO8)).